A 319-amino-acid chain; its full sequence is Olfactory receptor 51F1 (319 aa).

Residues M1–S37 are Extracellular-facing. Residues I38 to I58 traverse the membrane as a helical segment. Over I59–L75 the chain is Cytoplasmic. A helical membrane pass occupies residues S76–F96. The Extracellular segment spans residues E97–C106. A disulfide bridge links C106 with C188. A helical transmembrane segment spans residues I107 to T127. Over A128–R149 the chain is Cytoplasmic. A helical membrane pass occupies residues I150 to L170. At L171–D211 the chain is on the extracellular side. A helical membrane pass occupies residues L212–H232. Over S233 to T249 the chain is Cytoplasmic. A helical transmembrane segment spans residues C250–V270. Residues Y271–R279 are Extracellular-facing. Residues V280–I300 traverse the membrane as a helical segment. Residues D301 to K319 are Cytoplasmic-facing.

Belongs to the G-protein coupled receptor 1 family.

The protein localises to the cell membrane. Odorant receptor. The polypeptide is Olfactory receptor 51F1 (OR51F1) (Homo sapiens (Human)).